The primary structure comprises 114 residues: Large ribosomal subunit protein uL22 (114 aa).

The protein belongs to the universal ribosomal protein uL22 family. As to quaternary structure, part of the 50S ribosomal subunit.

This protein binds specifically to 23S rRNA; its binding is stimulated by other ribosomal proteins, e.g. L4, L17, and L20. It is important during the early stages of 50S assembly. It makes multiple contacts with different domains of the 23S rRNA in the assembled 50S subunit and ribosome. Functionally, the globular domain of the protein is located near the polypeptide exit tunnel on the outside of the subunit, while an extended beta-hairpin is found that lines the wall of the exit tunnel in the center of the 70S ribosome. This Ehrlichia ruminantium (strain Gardel) protein is Large ribosomal subunit protein uL22.